Consider the following 55-residue polypeptide: Large ribosomal subunit protein bL33 (55 aa).

Basic and acidic residues predominate over residues 1-11 (MAKGGREKIKL). A disordered region spans residues 1–27 (MAKGGREKIKLESTAGTGHFYTTSKNK). Residues 14–24 (TAGTGHFYTTS) show a composition bias toward polar residues.

This sequence belongs to the bacterial ribosomal protein bL33 family.

This chain is Large ribosomal subunit protein bL33, found in Dechloromonas aromatica (strain RCB).